A 639-amino-acid polypeptide reads, in one-letter code: Polyphenol oxidase, chloroplastic (639 aa).

The N-terminal 101 residues, 1-101, are a transit peptide targeting the chloroplast; the sequence is MATLSSPTII…EGANYYNTLA (101 aa). The disordered stretch occupies residues 35–58; the sequence is GVRSVNGKVSCQTKNNNGNDENNQ. Intrachain disulfides connect C111–C127 and C126–C194. Residues H193, H214, H223, H354, H358, and H388 each contribute to the Cu cation site. Positions 197–214 form a cross-link, 2'-(S-cysteinyl)-histidine (Cys-His); sequence CDGSYPVLGHNDTRLEVH.

It belongs to the tyrosinase family. The cofactor is Cu(2+).

It localises to the plastid. The protein resides in the chloroplast thylakoid lumen. The catalysed reaction is 2 catechol + O2 = 2 1,2-benzoquinone + 2 H2O. Functionally, catalyzes the oxidation of mono- and o-diphenols to o-diquinones. This Spinacia oleracea (Spinach) protein is Polyphenol oxidase, chloroplastic.